The primary structure comprises 132 residues: Ribosome-binding factor A (132 aa).

It belongs to the RbfA family. Monomer. Binds 30S ribosomal subunits, but not 50S ribosomal subunits or 70S ribosomes.

It is found in the cytoplasm. Its function is as follows. One of several proteins that assist in the late maturation steps of the functional core of the 30S ribosomal subunit. Associates with free 30S ribosomal subunits (but not with 30S subunits that are part of 70S ribosomes or polysomes). Required for efficient processing of 16S rRNA. May interact with the 5'-terminal helix region of 16S rRNA. In Xanthomonas campestris pv. campestris (strain 8004), this protein is Ribosome-binding factor A.